A 92-amino-acid chain; its full sequence is Large ribosomal subunit protein eL43 (92 aa).

Residues 39 to 60 (CSFCGKDSMKRAVVGIWSCKRC) form a C4-type zinc finger.

The protein belongs to the eukaryotic ribosomal protein eL43 family.

This Drosophila melanogaster (Fruit fly) protein is Large ribosomal subunit protein eL43 (RpL37A).